The primary structure comprises 286 residues: MSDAIQRVGVVGAGQMGSGIAEVSARAGVEVTVFEPAEALITAGRNRIVKSLERAVSAGKVTERERDRALGLLTFTTDLNDLSDRQLVIEAVVEDEAVKSEIFAELDRVVTDPDAVLASNTSSIPIMKVAAATKQPQRVLGLHFFNPVPVLPLVELVRTLVTDEAAAARTEEFASTVLGKQVVRCSDRSGFVVNALLVPYLLSAIRMVEAGFATVEDVDKAVVAGLSHPMGPLRLSDLVGLDTLKLIADKMFEEFKEPHYGPPPLLLRMVEAGQLGKKSGRGFYTY.

Belongs to the 3-hydroxyacyl-CoA dehydrogenase family.

The enzyme catalyses 3-hydroxybutanoyl-CoA + NAD(+) = acetoacetyl-CoA + NADH + H(+). The catalysed reaction is (3S)-3-hydroxybutanoyl-CoA + NADP(+) = acetoacetyl-CoA + NADPH + H(+). It participates in lipid metabolism; butanoate metabolism. In Mycobacterium tuberculosis (strain CDC 1551 / Oshkosh), this protein is 3-hydroxybutyryl-CoA dehydrogenase (fadB2).